Here is a 437-residue protein sequence, read N- to C-terminus: Keratin, type I cytoskeletal 13 (437 aa).

The tract at residues 1–95 is head; it reads MSCRFQSSSM…GVDGGLLSGN (95 aa). 2 positions are modified to omega-N-methylarginine: arginine 27 and arginine 35. The segment at 96 to 131 is coil 1A; sequence EKITMQNLNDRLASYLDKVRALEAANADLEVKIRDW. One can recognise an IF rod domain in the interval 96–408; it reads EKITMQNLND…SLLEGQDAKM (313 aa). A linker 1 region spans residues 132–150; the sequence is HLKQSPASPERDYSAYYKT. A coil 1B region spans residues 151–242; that stretch reads IEELRIKILE…KNHEEEMKEF (92 aa). The tract at residues 243–265 is linker 12; sequence SNQVVGQVNVEMDATPGIDLTRV. Residues 266 to 404 form a coil 2 region; sequence LAEMREQYEA…ATYRSLLEGQ (139 aa). The interval 405-437 is tail; it reads DAKMTGFNSGGNNTTTSNGSPSSNSGRPDFRKY. A disordered region spans residues 408-437; the sequence is MTGFNSGGNNTTTSNGSPSSNSGRPDFRKY. Positions 409 to 430 are enriched in low complexity; it reads TGFNSGGNNTTTSNGSPSSNSG.

This sequence belongs to the intermediate filament family. Heterotetramer of two type I and two type II keratins. In terms of processing, O-glycosylated; glycans consist of single N-acetylglucosamine residues. In terms of tissue distribution, expressed in tongue epithelia (at protein level). Expressed in upper suprabasal layers of the corneal epithelium (at protein level).

In terms of biological role, type 1 keratin. Maintains postnatal tongue mucosal cell homeostasis and tissue organization in response to mechanical stress, potentially via regulation of the G1/S phase cyclins CCNE1 and CCNE2. The polypeptide is Keratin, type I cytoskeletal 13 (Krt13) (Mus musculus (Mouse)).